Reading from the N-terminus, the 136-residue chain is Classical arabinogalactan protein 26 (136 aa).

Positions 1–21 are cleaved as a signal peptide; sequence MSVSLFTAFTVLSLCLHTSTS. The segment at 38–95 is disordered; the sequence is APSSFSASTPAMSPDTSPLFPTPGSSEMSPSPSESSIMPTIPSSLSPPNPDAVTPDPL. Residues 40 to 53 show a composition bias toward polar residues; it reads SSFSASTPAMSPDT. The span at 59-81 shows a compositional bias: low complexity; the sequence is TPGSSEMSPSPSESSIMPTIPSS. Ser-108 carries GPI-anchor amidated serine lipidation. Positions 109–136 are cleaved as a propeptide — removed in mature form; that stretch reads SSVCLVSSQLSSLLLVLLMLLLAFCSFF.

The protein belongs to the classical AGP family. O-glycosylated on the hydroxyproline residues.

The protein resides in the cell membrane. Functionally, proteoglycan that seems to be implicated in diverse developmental roles such as differentiation, cell-cell recognition, embryogenesis and programmed cell death. In Arabidopsis thaliana (Mouse-ear cress), this protein is Classical arabinogalactan protein 26 (AGP26).